A 292-amino-acid polypeptide reads, in one-letter code: Probable alpha-L-glutamate ligase (292 aa).

The ATP-grasp domain maps to 104-287; that stretch reads HQLLAAKGID…VATRIIEHVE (184 aa). Residues lysine 141, 178–179, aspartate 187, and 211–213 each bind ATP; these read EF and RSN. Mg(2+)-binding residues include aspartate 248, glutamate 260, and asparagine 262. The Mn(2+) site is built by aspartate 248, glutamate 260, and asparagine 262.

It belongs to the RimK family. Mg(2+) is required as a cofactor. Requires Mn(2+) as cofactor.

In Stenotrophomonas maltophilia (strain R551-3), this protein is Probable alpha-L-glutamate ligase.